A 179-amino-acid polypeptide reads, in one-letter code: uncharacterized protein (179 aa).

It localises to the plastid. It is found in the cyanelle. This is an uncharacterized protein from Cyanophora paradoxa.